The chain runs to 269 residues: Hydroxyethylthiazole kinase (269 aa).

A substrate-binding site is contributed by Met43. Residues Arg119 and Ser165 each coordinate ATP. Residue Ala192 coordinates substrate.

It belongs to the Thz kinase family. Requires Mg(2+) as cofactor.

The catalysed reaction is 5-(2-hydroxyethyl)-4-methylthiazole + ATP = 4-methyl-5-(2-phosphooxyethyl)-thiazole + ADP + H(+). It functions in the pathway cofactor biosynthesis; thiamine diphosphate biosynthesis; 4-methyl-5-(2-phosphoethyl)-thiazole from 5-(2-hydroxyethyl)-4-methylthiazole: step 1/1. Its function is as follows. Catalyzes the phosphorylation of the hydroxyl group of 4-methyl-5-beta-hydroxyethylthiazole (THZ). The protein is Hydroxyethylthiazole kinase of Glaesserella parasuis serovar 5 (strain SH0165) (Haemophilus parasuis).